A 595-amino-acid chain; its full sequence is 2-succinyl-5-enolpyruvyl-6-hydroxy-3-cyclohexene-1-carboxylate synthase (595 aa).

The protein belongs to the TPP enzyme family. MenD subfamily. In terms of assembly, homodimer. Mg(2+) serves as cofactor. The cofactor is Mn(2+). Requires thiamine diphosphate as cofactor.

It carries out the reaction isochorismate + 2-oxoglutarate + H(+) = 5-enolpyruvoyl-6-hydroxy-2-succinyl-cyclohex-3-ene-1-carboxylate + CO2. Its pathway is quinol/quinone metabolism; 1,4-dihydroxy-2-naphthoate biosynthesis; 1,4-dihydroxy-2-naphthoate from chorismate: step 2/7. It participates in cofactor biosynthesis; phylloquinone biosynthesis. In terms of biological role, catalyzes the thiamine diphosphate-dependent decarboxylation of 2-oxoglutarate and the subsequent addition of the resulting succinic semialdehyde-thiamine pyrophosphate anion to isochorismate to yield 2-succinyl-5-enolpyruvyl-6-hydroxy-3-cyclohexene-1-carboxylate (SEPHCHC). The chain is 2-succinyl-5-enolpyruvyl-6-hydroxy-3-cyclohexene-1-carboxylate synthase from Synechocystis sp. (strain ATCC 27184 / PCC 6803 / Kazusa).